The chain runs to 84 residues: Cell division topological specificity factor (84 aa).

The protein belongs to the MinE family.

Functionally, prevents the cell division inhibition by proteins MinC and MinD at internal division sites while permitting inhibition at polar sites. This ensures cell division at the proper site by restricting the formation of a division septum at the midpoint of the long axis of the cell. In Pseudomonas putida (strain ATCC 700007 / DSM 6899 / JCM 31910 / BCRC 17059 / LMG 24140 / F1), this protein is Cell division topological specificity factor.